Consider the following 234-residue polypeptide: Probable transcriptional regulatory protein Psyr_3028 (234 aa).

Belongs to the TACO1 family.

The protein resides in the cytoplasm. This is Probable transcriptional regulatory protein Psyr_3028 from Pseudomonas syringae pv. syringae (strain B728a).